A 537-amino-acid polypeptide reads, in one-letter code: Arginine--tRNA ligase (537 aa).

The 'HIGH' region signature appears at 113-123; sequence ANPTGELHLGH.

It belongs to the class-I aminoacyl-tRNA synthetase family. In terms of assembly, monomer.

Its subcellular location is the cytoplasm. It carries out the reaction tRNA(Arg) + L-arginine + ATP = L-arginyl-tRNA(Arg) + AMP + diphosphate. This Mycoplasma pneumoniae (strain ATCC 29342 / M129 / Subtype 1) (Mycoplasmoides pneumoniae) protein is Arginine--tRNA ligase (argS).